The sequence spans 172 residues: Peptidyl-tRNA hydrolase (172 aa).

Y10 is a binding site for tRNA. The active-site Proton acceptor is H15. F59, N61, and N101 together coordinate tRNA.

It belongs to the PTH family. Monomer.

The protein resides in the cytoplasm. It catalyses the reaction an N-acyl-L-alpha-aminoacyl-tRNA + H2O = an N-acyl-L-amino acid + a tRNA + H(+). In terms of biological role, hydrolyzes ribosome-free peptidyl-tRNAs (with 1 or more amino acids incorporated), which drop off the ribosome during protein synthesis, or as a result of ribosome stalling. Its function is as follows. Catalyzes the release of premature peptidyl moieties from peptidyl-tRNA molecules trapped in stalled 50S ribosomal subunits, and thus maintains levels of free tRNAs and 50S ribosomes. This Rubrobacter xylanophilus (strain DSM 9941 / JCM 11954 / NBRC 16129 / PRD-1) protein is Peptidyl-tRNA hydrolase.